The chain runs to 594 residues: NADH-quinone oxidoreductase subunit C/D (594 aa).

Residues 1–185 (MTTGSALYIP…DPFSLNLAKQ (185 aa)) form an NADH dehydrogenase I subunit C region. An NADH dehydrogenase I subunit D region spans residues 209 to 594 (DYMFLNLGPN…IDFVMADVDR (386 aa)).

It in the N-terminal section; belongs to the complex I 30 kDa subunit family. In the C-terminal section; belongs to the complex I 49 kDa subunit family. As to quaternary structure, NDH-1 is composed of 13 different subunits. Subunits NuoB, CD, E, F, and G constitute the peripheral sector of the complex.

The protein resides in the cell inner membrane. The enzyme catalyses a quinone + NADH + 5 H(+)(in) = a quinol + NAD(+) + 4 H(+)(out). Its function is as follows. NDH-1 shuttles electrons from NADH, via FMN and iron-sulfur (Fe-S) centers, to quinones in the respiratory chain. The immediate electron acceptor for the enzyme in this species is believed to be ubiquinone. Couples the redox reaction to proton translocation (for every two electrons transferred, four hydrogen ions are translocated across the cytoplasmic membrane), and thus conserves the redox energy in a proton gradient. The polypeptide is NADH-quinone oxidoreductase subunit C/D (Pseudomonas fluorescens (strain Pf0-1)).